The sequence spans 590 residues: ATP-dependent lipid A-core flippase (590 aa).

The next 6 membrane-spanning stretches (helical) occupy residues 31-51 (IFIA…VIPK), 74-94 (AILT…GYLL), 132-152 (AVIF…ITLV), 159-179 (VALL…VSVI), 259-279 (VTAF…MIQA), and 286-306 (IGGF…LKHL). The region spanning 33-315 (IAAILAMAVV…LTDINQPLTR (283 aa)) is the ABC transmembrane type-1 domain. Residues 347–585 (LVFERVGFRY…NGLYAGLHRI (239 aa)) form the ABC transporter domain. An ATP-binding site is contributed by 381–388 (GPSGSGKT).

The protein belongs to the ABC transporter superfamily. Lipid exporter (TC 3.A.1.106) family. As to quaternary structure, homodimer.

The protein resides in the cell inner membrane. The enzyme catalyses ATP + H2O + lipid A-core oligosaccharideSide 1 = ADP + phosphate + lipid A-core oligosaccharideSide 2.. In terms of biological role, involved in lipopolysaccharide (LPS) biosynthesis. Translocates lipid A-core from the inner to the outer leaflet of the inner membrane. Transmembrane domains (TMD) form a pore in the inner membrane and the ATP-binding domain (NBD) is responsible for energy generation. This Cupriavidus pinatubonensis (strain JMP 134 / LMG 1197) (Cupriavidus necator (strain JMP 134)) protein is ATP-dependent lipid A-core flippase.